Consider the following 223-residue polypeptide: Leucyl/phenylalanyl-tRNA--protein transferase (223 aa).

Belongs to the L/F-transferase family.

Its subcellular location is the cytoplasm. The enzyme catalyses N-terminal L-lysyl-[protein] + L-leucyl-tRNA(Leu) = N-terminal L-leucyl-L-lysyl-[protein] + tRNA(Leu) + H(+). It catalyses the reaction N-terminal L-arginyl-[protein] + L-leucyl-tRNA(Leu) = N-terminal L-leucyl-L-arginyl-[protein] + tRNA(Leu) + H(+). It carries out the reaction L-phenylalanyl-tRNA(Phe) + an N-terminal L-alpha-aminoacyl-[protein] = an N-terminal L-phenylalanyl-L-alpha-aminoacyl-[protein] + tRNA(Phe). Its function is as follows. Functions in the N-end rule pathway of protein degradation where it conjugates Leu, Phe and, less efficiently, Met from aminoacyl-tRNAs to the N-termini of proteins containing an N-terminal arginine or lysine. The sequence is that of Leucyl/phenylalanyl-tRNA--protein transferase from Dinoroseobacter shibae (strain DSM 16493 / NCIMB 14021 / DFL 12).